The sequence spans 260 residues: Triosephosphate isomerase (260 aa).

Substrate is bound at residue 11 to 13; sequence NWK. Histidine 103 serves as the catalytic Electrophile. Glutamate 175 acts as the Proton acceptor in catalysis. Substrate contacts are provided by residues glycine 181, serine 220, and 241-242; that span reads GG.

This sequence belongs to the triosephosphate isomerase family. In terms of assembly, homodimer.

It is found in the cytoplasm. It carries out the reaction D-glyceraldehyde 3-phosphate = dihydroxyacetone phosphate. It participates in carbohydrate biosynthesis; gluconeogenesis. It functions in the pathway carbohydrate degradation; glycolysis; D-glyceraldehyde 3-phosphate from glycerone phosphate: step 1/1. In terms of biological role, involved in the gluconeogenesis. Catalyzes stereospecifically the conversion of dihydroxyacetone phosphate (DHAP) to D-glyceraldehyde-3-phosphate (G3P). This is Triosephosphate isomerase from Shewanella halifaxensis (strain HAW-EB4).